Reading from the N-terminus, the 766-residue chain is Protein STB6 (766 aa).

The disordered stretch occupies residues 447 to 469; that stretch reads VPSEQLTTSNKEDSDTQPTKRNS. S514 carries the post-translational modification Phosphoserine.

The protein to yeast STB2.

Binds to SIN3. The protein is Protein STB6 (STB6) of Saccharomyces cerevisiae (strain ATCC 204508 / S288c) (Baker's yeast).